The chain runs to 739 residues: Phosphoribosylformylglycinamidine synthase subunit PurL (739 aa).

His-54 is an active-site residue. Residues Tyr-57 and Lys-96 each coordinate ATP. Glu-98 is a Mg(2+) binding site. Substrate-binding positions include 99 to 102 and Arg-121; that span reads SHNH. The Proton acceptor role is filled by His-100. Asp-122 is a Mg(2+) binding site. Gln-245 provides a ligand contact to substrate. A Mg(2+)-binding site is contributed by Asp-275. Residue 319-321 participates in substrate binding; the sequence is ESQ. ATP-binding residues include Asp-504 and Gly-541. Asn-542 provides a ligand contact to Mg(2+). A substrate-binding site is contributed by Ser-544.

Belongs to the FGAMS family. As to quaternary structure, monomer. Part of the FGAM synthase complex composed of 1 PurL, 1 PurQ and 2 PurS subunits.

The protein resides in the cytoplasm. The catalysed reaction is N(2)-formyl-N(1)-(5-phospho-beta-D-ribosyl)glycinamide + L-glutamine + ATP + H2O = 2-formamido-N(1)-(5-O-phospho-beta-D-ribosyl)acetamidine + L-glutamate + ADP + phosphate + H(+). It participates in purine metabolism; IMP biosynthesis via de novo pathway; 5-amino-1-(5-phospho-D-ribosyl)imidazole from N(2)-formyl-N(1)-(5-phospho-D-ribosyl)glycinamide: step 1/2. Part of the phosphoribosylformylglycinamidine synthase complex involved in the purines biosynthetic pathway. Catalyzes the ATP-dependent conversion of formylglycinamide ribonucleotide (FGAR) and glutamine to yield formylglycinamidine ribonucleotide (FGAM) and glutamate. The FGAM synthase complex is composed of three subunits. PurQ produces an ammonia molecule by converting glutamine to glutamate. PurL transfers the ammonia molecule to FGAR to form FGAM in an ATP-dependent manner. PurS interacts with PurQ and PurL and is thought to assist in the transfer of the ammonia molecule from PurQ to PurL. The protein is Phosphoribosylformylglycinamidine synthase subunit PurL of Lactococcus lactis subsp. cremoris (Streptococcus cremoris).